The sequence spans 284 residues: 4-hydroxybenzoate octaprenyltransferase (284 aa).

Helical transmembrane passes span 19–39 (IPILLILWPTLTALVLASHGL), 42–62 (ISYLVIFTIGVVVMRTVGCII), 85–105 (GQLSIKNAIWLCISLTLVAFI), 107–127 (VLFLNLYTILLSFVALFLAIL), 134–154 (FFAIPQLILGLAFNFGIFMAF), 165–185 (AWIFYIATICWTIAYDTIYAL), 211–231 (ILLFNFLSLLLLIILGIYCDF), 233–253 (SFFYLGVVICSLFFVRNYFLY), and 261–281 (CINAFSANHWIGLIIFIIAVI).

Belongs to the UbiA prenyltransferase family. The cofactor is Mg(2+).

The protein localises to the cell inner membrane. The enzyme catalyses all-trans-octaprenyl diphosphate + 4-hydroxybenzoate = 4-hydroxy-3-(all-trans-octaprenyl)benzoate + diphosphate. Its pathway is cofactor biosynthesis; ubiquinone biosynthesis. Its function is as follows. Catalyzes the prenylation of para-hydroxybenzoate (PHB) with an all-trans polyprenyl group. Mediates the second step in the final reaction sequence of ubiquinone-8 (UQ-8) biosynthesis, which is the condensation of the polyisoprenoid side chain with PHB, generating the first membrane-bound Q intermediate 3-octaprenyl-4-hydroxybenzoate. The sequence is that of 4-hydroxybenzoate octaprenyltransferase from Francisella tularensis subsp. holarctica (strain LVS).